The following is a 536-amino-acid chain: Probable monofunctional riboflavin biosynthesis protein RIBA 3, chloroplastic (536 aa).

The transit peptide at 1-43 directs the protein to the chloroplast; it reads MDRVLLSSQLSSQTVVNTRVQQGSGGINSIGFAVIRKGSLKLR. The segment at 44-310 is inactive DHBP synthase; that stretch reads CYAIGGLGGG…IADLIRYRRK (267 aa). Residues 133 to 134, aspartate 138, and 248 to 252 each bind D-ribulose 5-phosphate; these read GD and RAGHT. A GTP cyclohydrolase II region spans residues 311-536; sequence REKLVELIAV…GDQDEDDTHN (226 aa). 361 to 365 provides a ligand contact to GTP; the sequence is RVHSE. The Zn(2+) site is built by cysteine 366, cysteine 377, and cysteine 379. Residues glutamine 382, 405-407, and threonine 427 each bind GTP; that span reads EGR. Residue aspartate 439 is the Proton acceptor; for GTP cyclohydrolase activity of the active site. Arginine 441 functions as the Nucleophile; for GTP cyclohydrolase activity in the catalytic mechanism. Threonine 462 and lysine 467 together coordinate GTP. The interval 507–536 is disordered; sequence YGSDLPGNVPEEFLNPDDIAGDQDEDDTHN. Over residues 525–536 the composition is skewed to acidic residues; the sequence is IAGDQDEDDTHN.

The protein in the N-terminal section; belongs to the DHBP synthase family. This sequence in the C-terminal section; belongs to the GTP cyclohydrolase II family. Zn(2+) is required as a cofactor.

It localises to the plastid. Its subcellular location is the chloroplast. The catalysed reaction is GTP + 4 H2O = 2,5-diamino-6-hydroxy-4-(5-phosphoribosylamino)-pyrimidine + formate + 2 phosphate + 3 H(+). It functions in the pathway cofactor biosynthesis; riboflavin biosynthesis; 5-amino-6-(D-ribitylamino)uracil from GTP: step 1/4. Its function is as follows. Involved in riboflavin biosynthesis. Catalyzes the conversion of GTP to 2,5-diamino-6-ribosylamino-4(3H)-pyrimidinone 5'-phosphate (DARP), formate and pyrophosphate. This is Probable monofunctional riboflavin biosynthesis protein RIBA 3, chloroplastic (RIBA3) from Oryza sativa subsp. japonica (Rice).